The chain runs to 128 residues: MEKVSIVCFFFFLLFGSGYGGLPPFWRATVVTMTNLIGGPPLTIHCKSKQDDLGIHVVPFKQEYHFKFQPNLWKSTLFFCSFQWDSQFKSFDIYDAQRDQGICDDCQWEIKPDGPCRLGKKAKCFPWK.

The signal sequence occupies residues 1 to 20 (MEKVSIVCFFFFLLFGSGYG).

It belongs to the plant self-incompatibility (S1) protein family.

It is found in the secreted. This chain is S-protein homolog 5, found in Arabidopsis thaliana (Mouse-ear cress).